The chain runs to 503 residues: Maturase K (503 aa).

Belongs to the intron maturase 2 family. MatK subfamily.

Its subcellular location is the plastid. The protein resides in the chloroplast. Functionally, usually encoded in the trnK tRNA gene intron. Probably assists in splicing its own and other chloroplast group II introns. The protein is Maturase K of Rosa californica (California wild rose).